The following is a 302-amino-acid chain: Sulfate adenylyltransferase subunit 2 (302 aa).

The protein belongs to the PAPS reductase family. CysD subfamily. In terms of assembly, heterodimer composed of CysD, the smaller subunit, and CysN.

It carries out the reaction sulfate + ATP + H(+) = adenosine 5'-phosphosulfate + diphosphate. It functions in the pathway sulfur metabolism; hydrogen sulfide biosynthesis; sulfite from sulfate: step 1/3. In terms of biological role, with CysN forms the ATP sulfurylase (ATPS) that catalyzes the adenylation of sulfate producing adenosine 5'-phosphosulfate (APS) and diphosphate, the first enzymatic step in sulfur assimilation pathway. APS synthesis involves the formation of a high-energy phosphoric-sulfuric acid anhydride bond driven by GTP hydrolysis by CysN coupled to ATP hydrolysis by CysD. The sequence is that of Sulfate adenylyltransferase subunit 2 from Bacteroides thetaiotaomicron (strain ATCC 29148 / DSM 2079 / JCM 5827 / CCUG 10774 / NCTC 10582 / VPI-5482 / E50).